Reading from the N-terminus, the 717-residue chain is Photosystem I P700 chlorophyll a apoprotein A1 (717 aa).

Helical transmembrane passes span 59–82 (VFRAHFGQLAIILIWLSGMYFHGA), 145–168 (LYCTAIGALIFAALMLFAGWFHYH), 184–208 (LNHHLAGLLGLGSLSWAGHQVHVSL), 280–298 (TAHHHLAIAILFLIAGHMY), 335–358 (WHAQLALNLAMLGSLTIVVAHHMY), 374–400 (LSLFTHHMWIGGFLIVGAAAHAAIFMV), 422–444 (AIVSHLNWACIFLGFHSFGLYIH), and 520–538 (FLVHHIHAFTIHVTVLILL). The [4Fe-4S] cluster site is built by C562 and C571. 2 helical membrane passes run 578-599 (HVFLGLFWMYNAISVVIFHFSW) and 653-675 (LSAYGLLFLGAHXVWAFSLMFLF). A chlorophyll a'-binding site is contributed by H664. The chlorophyll a site is built by M672 and Y680. Position 681 (W681) interacts with phylloquinone. A helical transmembrane segment spans residues 713–717 (AVGVA).

It belongs to the PsaA/PsaB family. As to quaternary structure, the PsaA/B heterodimer binds the P700 chlorophyll special pair and subsequent electron acceptors. PSI consists of a core antenna complex that captures photons, and an electron transfer chain that converts photonic excitation into a charge separation. The eukaryotic PSI reaction center is composed of at least 11 subunits. The cofactor is P700 is a chlorophyll a/chlorophyll a' dimer, A0 is one or more chlorophyll a, A1 is one or both phylloquinones and FX is a shared 4Fe-4S iron-sulfur center..

The protein localises to the plastid. It localises to the chloroplast thylakoid membrane. The catalysed reaction is reduced [plastocyanin] + hnu + oxidized [2Fe-2S]-[ferredoxin] = oxidized [plastocyanin] + reduced [2Fe-2S]-[ferredoxin]. Its function is as follows. PsaA and PsaB bind P700, the primary electron donor of photosystem I (PSI), as well as the electron acceptors A0, A1 and FX. PSI is a plastocyanin-ferredoxin oxidoreductase, converting photonic excitation into a charge separation, which transfers an electron from the donor P700 chlorophyll pair to the spectroscopically characterized acceptors A0, A1, FX, FA and FB in turn. Oxidized P700 is reduced on the lumenal side of the thylakoid membrane by plastocyanin. This chain is Photosystem I P700 chlorophyll a apoprotein A1, found in Cycas revoluta (Sago palm).